We begin with the raw amino-acid sequence, 207 residues long: uncharacterized protein (207 aa).

It is found in the mitochondrion. This is an uncharacterized protein from Marchantia polymorpha (Common liverwort).